Reading from the N-terminus, the 151-residue chain is Methylated-DNA--protein-cysteine methyltransferase (151 aa).

Cys119 functions as the Nucleophile; methyl group acceptor in the catalytic mechanism.

The protein belongs to the MGMT family.

It localises to the cytoplasm. It carries out the reaction a 6-O-methyl-2'-deoxyguanosine in DNA + L-cysteinyl-[protein] = S-methyl-L-cysteinyl-[protein] + a 2'-deoxyguanosine in DNA. The enzyme catalyses a 4-O-methyl-thymidine in DNA + L-cysteinyl-[protein] = a thymidine in DNA + S-methyl-L-cysteinyl-[protein]. Involved in the cellular defense against the biological effects of O6-methylguanine (O6-MeG) and O4-methylthymine (O4-MeT) in DNA. Repairs the methylated nucleobase in DNA by stoichiometrically transferring the methyl group to a cysteine residue in the enzyme. This is a suicide reaction: the enzyme is irreversibly inactivated. The polypeptide is Methylated-DNA--protein-cysteine methyltransferase (Saccharolobus islandicus (strain L.S.2.15 / Lassen #1) (Sulfolobus islandicus)).